Here is a 188-residue protein sequence, read N- to C-terminus: Ribosome-recycling factor (188 aa).

It belongs to the RRF family.

It is found in the cytoplasm. Functionally, responsible for the release of ribosomes from messenger RNA at the termination of protein biosynthesis. May increase the efficiency of translation by recycling ribosomes from one round of translation to another. In Acidiphilium cryptum (strain JF-5), this protein is Ribosome-recycling factor.